The primary structure comprises 693 residues: Sister chromatid cohesion 1 protein 3 (693 aa).

Disordered stretches follow at residues I167–V250, D262–D361, P460–N511, and T545–N573. 2 stretches are compositionally biased toward basic and acidic residues: residues V178–D201 and T232–D243. Polar residues predominate over residues S264–D277. Residues V278–P295 are compositionally biased toward basic and acidic residues. Low complexity predominate over residues R316 to G325. Polar residues-rich tracts occupy residues P465–E483 and T545–V564.

This sequence belongs to the rad21 family. As to quaternary structure, component of the cohesin complex. In terms of tissue distribution, low expression in shoots, buds, siliques, leaves and roots. Found in, but not limited to, actively dividing cells: in procambium, protoderm and ground meristem in roots, and in shoot and floral meristems.

It localises to the nucleus. Its function is as follows. May be involved in sister chromatid cohesion during mitosis. This is Sister chromatid cohesion 1 protein 3 (SYN3) from Arabidopsis thaliana (Mouse-ear cress).